The primary structure comprises 164 residues: MKCKPNQTRTYDPEGFKKRAACLCFRSEREDEVLLVSSSRYPDRWIVPGGGMEPEEEPDGAAVREVYEEAGVKGKLGRLLGVFEQNQDRKHRTYVFVLTVTELLEDWEDSVSIGRKREWFKIEDAIKVLQCHKPVHAEYLEKLKLGGSPTNGNSAAPSPPESEP.

Residues arginine 9, 17-19 (KKR), and 38-40 (SSR) each bind substrate. Residues 17–144 (KKRAACLCFR…VHAEYLEKLK (128 aa)) form the Nudix hydrolase domain. Residues glycine 49 and glutamate 65 each contribute to the Mg(2+) site. The Nudix box signature appears at 50-71 (GGMEPEEEPDGAAVREVYEEAG). The active-site Proton acceptor is the glutamate 68. Glutamate 69 contributes to the Mg(2+) binding site. Substrate contacts are provided by residues 89–91 (RKH), arginine 115, and lysine 133. Residues 144–164 (KLGGSPTNGNSAAPSPPESEP) are disordered.

Belongs to the Nudix hydrolase family. DIPP subfamily. Requires Mg(2+) as cofactor. Mn(2+) is required as a cofactor. In terms of tissue distribution, mainly expressed in testis, liver kidney and, at lower level, in heart, brain, spleen, lung and skeletal muscle.

The protein localises to the cytoplasm. The catalysed reaction is diphospho-myo-inositol polyphosphate + H2O = myo-inositol polyphosphate + phosphate.. It catalyses the reaction P(1),P(6)-bis(5'-adenosyl) hexaphosphate + H2O = adenosine 5'-pentaphosphate + AMP + 2 H(+). It carries out the reaction P(1),P(5)-bis(5'-adenosyl) pentaphosphate + H2O = adenosine 5'-tetraphosphate + AMP + 2 H(+). In terms of biological role, cleaves a beta-phosphate from the diphosphate groups in PP-InsP5 (diphosphoinositol pentakisphosphate), suggesting that it may play a role in signal transduction. Also able to catalyze the hydrolysis of dinucleoside oligophosphates, with Ap6A and Ap5A being the preferred substrates. The major reaction products are ADP and p4a from Ap6A and ADP and ATP from Ap5A. Also able to hydrolyze 5-phosphoribose 1-diphosphate; however, the relevance of such activity in vivo remains unclear. This Mus musculus (Mouse) protein is Diphosphoinositol polyphosphate phosphohydrolase 3-alpha.